A 380-amino-acid polypeptide reads, in one-letter code: MRCLLLWMVVLAARAAPARSLVYRGEAVGLRADGPVAFAVHPTDATLALRGRLIFLEHQLPAGRRYNGTVELLRYHAAGDCFVMLQTTAFASCPRVANNAFRSCLHADTRPARSERRASAAVENHVLFSIARPRPIDSGLYFLRVGIYGGTAGSERRRDVFPLAAFVHSFGEPGDPEAAARTPAPSRQSRPAASGLTSSASLYDRALARSPQAPPPRPAPPRAARAGPRRPERVDETTEVEAATRAGSAFALTTPPAGPTASPAASPSRAFSAAAPAAAAQPAGDTPARFRRQLASILVPLCVLVLLLLALCAATVNCALRRRLLPCSRRVYKPRTCAACGSGTCAGRPPCRGAAPSAPATVVALGSRPKAPPLATISEE.

A signal peptide spans 1–20 (MRCLLLWMVVLAARAAPARS). The Virion surface portion of the chain corresponds to 21–293 (LVYRGEAVGL…GDTPARFRRQ (273 aa)). N-linked (GlcNAc...) asparagine; by host glycosylation is present at asparagine 67. The disordered stretch occupies residues 172–269 (EPGDPEAAAR…TASPAASPSR (98 aa)). Polar residues predominate over residues 185–201 (PSRQSRPAASGLTSSAS). Pro residues predominate over residues 212 to 221 (QAPPPRPAPP). Over residues 249 to 269 (AFALTTPPAGPTASPAASPSR) the composition is skewed to low complexity. A helical membrane pass occupies residues 294–314 (LASILVPLCVLVLLLLALCAA). The Intravirion segment spans residues 315–380 (TVNCALRRRL…APPLATISEE (66 aa)).

Belongs to the alphaherpesvirinae glycoprotein I family. In terms of assembly, interacts with gE.

The protein resides in the virion membrane. It is found in the host cell membrane. It localises to the host cell junction. Its subcellular location is the host Golgi apparatus membrane. Functionally, in epithelial cells, the heterodimer gE/gI is required for the cell-to-cell spread of the virus, by sorting nascent virions to cell junctions. Once the virus reaches the cell junctions, virus particles can spread to adjacent cells extremely rapidly through interactions with cellular receptors that accumulate at these junctions. Implicated in basolateral spread in polarized cells. In neuronal cells, gE/gI is essential for the anterograde spread of the infection throughout the host nervous system. Together with US9, the heterodimer gE/gI is involved in the sorting and transport of viral structural components toward axon tips. The sequence is that of Envelope glycoprotein I (gI) from Bos taurus (Bovine).